Consider the following 150-residue polypeptide: Peptidoglycan-associated lipoprotein (150 aa).

Positions 1 to 19 (MKKLTKVLLVAGSVAVLAA) are cleaved as a signal peptide. Cys20 is lipidated: N-palmitoyl cysteine. Residue Cys20 is the site of S-diacylglycerol cysteine attachment. The 114-residue stretch at 37–150 (SVQDLQQRYN…SKNRRAVLAY (114 aa)) folds into the OmpA-like domain.

Belongs to the Pal lipoprotein family. The Tol-Pal system is composed of five core proteins: the inner membrane proteins TolA, TolQ and TolR, the periplasmic protein TolB and the outer membrane protein Pal. They form a network linking the inner and outer membranes and the peptidoglycan layer.

It is found in the cell outer membrane. In terms of biological role, part of the Tol-Pal system, which plays a role in outer membrane invagination during cell division and is important for maintaining outer membrane integrity. The protein is Peptidoglycan-associated lipoprotein of Pasteurella multocida (strain Pm70).